A 161-amino-acid chain; its full sequence is SsrA-binding protein (161 aa).

A disordered region spans residues 138 to 161 (DKRTDSKEKDWNRDKARIMKSSLR). Residues 139 to 154 (KRTDSKEKDWNRDKAR) are compositionally biased toward basic and acidic residues.

The protein belongs to the SmpB family.

It localises to the cytoplasm. In terms of biological role, required for rescue of stalled ribosomes mediated by trans-translation. Binds to transfer-messenger RNA (tmRNA), required for stable association of tmRNA with ribosomes. tmRNA and SmpB together mimic tRNA shape, replacing the anticodon stem-loop with SmpB. tmRNA is encoded by the ssrA gene; the 2 termini fold to resemble tRNA(Ala) and it encodes a 'tag peptide', a short internal open reading frame. During trans-translation Ala-aminoacylated tmRNA acts like a tRNA, entering the A-site of stalled ribosomes, displacing the stalled mRNA. The ribosome then switches to translate the ORF on the tmRNA; the nascent peptide is terminated with the 'tag peptide' encoded by the tmRNA and targeted for degradation. The ribosome is freed to recommence translation, which seems to be the essential function of trans-translation. The chain is SsrA-binding protein from Aliivibrio fischeri (strain MJ11) (Vibrio fischeri).